We begin with the raw amino-acid sequence, 229 residues long: Lipoprotein-releasing system ATP-binding protein LolD (229 aa).

An ABC transporter domain is found at 7–229; that stretch reads LKCKNVTKTY…KNGKLYKKNL (223 aa). An ATP-binding site is contributed by 43–50; it reads GDSGSGKS.

This sequence belongs to the ABC transporter superfamily. Lipoprotein translocase (TC 3.A.1.125) family. As to quaternary structure, the complex is composed of two ATP-binding proteins (LolD) and two transmembrane proteins (LolC and LolE).

Its subcellular location is the cell membrane. Its function is as follows. Part of the ABC transporter complex LolCDE involved in the translocation of lipoproteins, in an ATP-dependent manner. In Wigglesworthia glossinidia brevipalpis, this protein is Lipoprotein-releasing system ATP-binding protein LolD.